A 531-amino-acid polypeptide reads, in one-letter code: Probable calcium-binding mitochondrial carrier F17E5.2 (531 aa).

4 consecutive EF-hand domains span residues glutamate 70–isoleucine 105, proline 106–isoleucine 135, alanine 136–asparagine 171, and leucine 172–threonine 207. The Ca(2+) site is built by aspartate 83, aspartate 85, aspartate 87, serine 89, and aspartate 94. Residues aspartate 149, asparagine 151, aspartate 153, glutamate 155, and glutamate 160 each coordinate Ca(2+). 3 Solcar repeats span residues glycine 242 to tryptophan 328, leucine 338 to methionine 424, and proline 435 to glutamine 525. The next 6 membrane-spanning stretches (helical) occupy residues leucine 248–phenylalanine 265, glycine 303–tyrosine 322, serine 348–methionine 361, glycine 399–tyrosine 418, leucine 441–leucine 458, and glycine 500–valine 517.

It belongs to the mitochondrial carrier (TC 2.A.29) family.

It localises to the mitochondrion inner membrane. Functionally, calcium-dependent mitochondrial solute carrier. This chain is Probable calcium-binding mitochondrial carrier F17E5.2, found in Caenorhabditis elegans.